A 221-amino-acid polypeptide reads, in one-letter code: Histone H1.3 (221 aa).

Residues 1-17 (MSETAPLAPTIPAPAEK) are compositionally biased toward low complexity. The disordered stretch occupies residues 1–43 (MSETAPLAPTIPAPAEKTPVKKKAKKAGATAGKRKASGPPVSE). Position 2 is an N-acetylserine (serine 2). Serine 2 carries the phosphoserine modification. The residue at position 17 (lysine 17) is an N6-acetyllysine. Residue threonine 18 is modified to Phosphothreonine. Over residues 20-36 (VKKKAKKAGATAGKRKA) the composition is skewed to basic residues. 3 positions are modified to N6-(beta-hydroxybutyryl)lysine: lysine 35, lysine 47, and lysine 53. The H15 domain occupies 37 to 110 (SGPPVSELIT…GASGSFKLNK (74 aa)). Arginine 55 bears the Citrulline mark. Residues lysine 65, lysine 76, lysine 86, and lysine 91 each carry the N6-(beta-hydroxybutyryl)lysine modification. The segment at 90 to 221 (SKGTLVQTKG…KAKKAAPKKK (132 aa)) is disordered. Serine 105 is subject to Phosphoserine; by PKC. Lysine 107 bears the N6-(beta-hydroxybutyryl)lysine mark. 3 stretches are compositionally biased toward basic residues: residues 120 to 141 (KAKK…KPKK), 150 to 161 (KSIKKTPKKVKK), and 170 to 179 (KVAKSAKKVK). Residue lysine 170 is modified to N6-(beta-hydroxybutyryl)lysine. The span at 180–193 (TPQPKKAAKSPAKA) shows a compositional bias: low complexity. Positions 194 to 221 (KAPKPKAAKPKSGKPKVTKAKKAAPKKK) are enriched in basic residues.

Belongs to the histone H1/H5 family. In terms of processing, H1 histones are progressively phosphorylated during the cell cycle, becoming maximally phosphorylated during late G2 phase and M phase, and being dephosphorylated sharply thereafter. Citrullination at Arg-55 (H1R54ci) by PADI4 takes place within the DNA-binding site of H1 and results in its displacement from chromatin and global chromatin decondensation, thereby promoting pluripotency and stem cell maintenance.

It is found in the nucleus. Its subcellular location is the chromosome. In terms of biological role, histone H1 protein binds to linker DNA between nucleosomes forming the macromolecular structure known as the chromatin fiber. Histones H1 are necessary for the condensation of nucleosome chains into higher-order structured fibers. Also acts as a regulator of individual gene transcription through chromatin remodeling, nucleosome spacing and DNA methylation. This Homo sapiens (Human) protein is Histone H1.3.